A 314-amino-acid chain; its full sequence is DNA-directed RNA polymerase subunit alpha (314 aa).

The interval 1 to 229 is alpha N-terminal domain (alpha-NTD); the sequence is MLESKLKAPV…EHLNYFANPE (229 aa). The segment at 246–314 is alpha C-terminal domain (alpha-CTD); it reads SAEEDLDLPL…LAKKGFTLKE (69 aa).

It belongs to the RNA polymerase alpha chain family. In terms of assembly, homodimer. The RNAP catalytic core consists of 2 alpha, 1 beta, 1 beta' and 1 omega subunit. When a sigma factor is associated with the core the holoenzyme is formed, which can initiate transcription.

It catalyses the reaction RNA(n) + a ribonucleoside 5'-triphosphate = RNA(n+1) + diphosphate. DNA-dependent RNA polymerase catalyzes the transcription of DNA into RNA using the four ribonucleoside triphosphates as substrates. The protein is DNA-directed RNA polymerase subunit alpha (rpoA) of Thermus aquaticus.